Reading from the N-terminus, the 101-residue chain is Ribonuclease P protein component 1 (101 aa).

It belongs to the eukaryotic/archaeal RNase P protein component 1 family. In terms of assembly, consists of a catalytic RNA component and at least 4-5 protein subunits.

Its subcellular location is the cytoplasm. The enzyme catalyses Endonucleolytic cleavage of RNA, removing 5'-extranucleotides from tRNA precursor.. Functionally, part of ribonuclease P, a protein complex that generates mature tRNA molecules by cleaving their 5'-ends. This is Ribonuclease P protein component 1 from Methanococcoides burtonii (strain DSM 6242 / NBRC 107633 / OCM 468 / ACE-M).